Reading from the N-terminus, the 1438-residue chain is DNA-directed RNA polymerase subunit beta' (1438 aa).

4 residues coordinate Zn(2+): cysteine 72, cysteine 74, cysteine 87, and cysteine 90. 3 residues coordinate Mg(2+): aspartate 483, aspartate 485, and aspartate 487. Zn(2+) contacts are provided by cysteine 831, cysteine 905, cysteine 912, and cysteine 915.

This sequence belongs to the RNA polymerase beta' chain family. As to quaternary structure, the RNAP catalytic core consists of 2 alpha, 1 beta, 1 beta' and 1 omega subunit. When a sigma factor is associated with the core the holoenzyme is formed, which can initiate transcription. The cofactor is Mg(2+). Zn(2+) is required as a cofactor.

It carries out the reaction RNA(n) + a ribonucleoside 5'-triphosphate = RNA(n+1) + diphosphate. Functionally, DNA-dependent RNA polymerase catalyzes the transcription of DNA into RNA using the four ribonucleoside triphosphates as substrates. This Flavobacterium psychrophilum (strain ATCC 49511 / DSM 21280 / CIP 103535 / JIP02/86) protein is DNA-directed RNA polymerase subunit beta'.